Here is a 655-residue protein sequence, read N- to C-terminus: Tumor necrosis factor receptor superfamily member 21 (655 aa).

The signal sequence occupies residues 1–41; it reads MGTSASSITALASCSRIAGQVGATMVAGSLLLLGFLSTITA. Residues 42 to 349 lie on the Extracellular side of the membrane; that stretch reads QPEQKTLSLT…PHKHFDINEH (308 aa). TNFR-Cys repeat units follow at residues 50–88, 90–131, 133–167, and 170–211; these read LTGTYRHVDRTTGQVLTCDKCPAGTYVSEHCTNTSLRVC, SCPS…DREC, CPPGMYQSNGTCAPHTVCPVGWGVRKKGTENEDVR, and QCAR…DNVC. Intrachain disulfides connect C67/C80, C70/C88, C91/C106, C109/C123, C113/C131, C133/C144, C150/C168, C171/C186, and C192/C211. N-linked (GlcNAc...) asparagine glycosylation is present at N82. Disordered regions lie at residues 214 to 306 and 318 to 338; these read HLSS…GPHH and EATGEKSSTAIKAPKRGHPRQ. Positions 216-225 are enriched in low complexity; that stretch reads SSSSTTPSSP. Polar residues-rich tracts occupy residues 241–262 and 276–302; these read VPSSTYEPQGMNSTDSNSTASV and PDNTSSTSGKESTNRTLPNPPQLTHQQ. Residues N252, N278, and N289 are each glycosylated (N-linked (GlcNAc...) asparagine). Residues 350–370 traverse the membrane as a helical segment; sequence LPWMIVLFLLLVLVLIVVCSI. A lipid anchor (S-palmitoyl cysteine) is attached at C368. Residues 371–655 are Cytoplasmic-facing; the sequence is RKSSRTLKKG…SVYSHLPDLL (285 aa). One can recognise a Death domain in the interval 415 to 498; sequence GIDILKLVAA…DVVEKIRGLM (84 aa).

As to quaternary structure, associates with TRADD. Interacts with NGFR. Interacts with CASP8. Post-translationally, oxidized in response to reactive oxygen species (ROS), leading to endocytosis. In terms of tissue distribution, detected in brain (at protein level). Detected in corpus callosum oligodendrocytes. Detected in embryonic and adult brain.

The protein localises to the cell membrane. In terms of biological role, promotes apoptosis, possibly via a pathway that involves the activation of NF-kappa-B. Can also promote apoptosis mediated by BAX and by the release of cytochrome c from the mitochondria into the cytoplasm. Trophic-factor deprivation triggers the cleavage of surface APP by beta-secretase to release sAPP-beta which is further cleaved to release an N-terminal fragment of APP (N-APP). Negatively regulates oligodendrocyte survival, maturation and myelination. Plays a role in signaling cascades triggered by stimulation of T-cell receptors, in the adaptive immune response and in the regulation of T-cell differentiation and proliferation. Negatively regulates T-cell responses and the release of cytokines such as IL4, IL5, IL10, IL13 and IFNG by Th2 cells. Negatively regulates the production of IgG, IgM and IgM in response to antigens. May inhibit the activation of JNK in response to T-cell stimulation. Also acts as a regulator of pyroptosis: recruits CASP8 in response to reactive oxygen species (ROS) and subsequent oxidation, leading to activation of GSDMC. The polypeptide is Tumor necrosis factor receptor superfamily member 21 (Tnfrsf21) (Rattus norvegicus (Rat)).